The primary structure comprises 393 residues: (S)-mandelate dehydrogenase (393 aa).

One can recognise an FMN hydroxy acid dehydrogenase domain in the interval 1 to 377; sequence MSQNLFNVED…SPDYLQNEGV (377 aa). Tyr26 contacts (S)-mandelate. Residues 79–81, Ser108, and Gln129 each bind FMN; that span reads PTG. (S)-mandelate is bound at residue Tyr131. Thr156 is an FMN binding site. Arg165 is a binding site for (S)-mandelate. Residue Lys250 participates in FMN binding. Residues His274 and Arg277 each coordinate (S)-mandelate. The active-site Proton acceptor is the His274. Residues 303–307 and 326–327 contribute to the FMN site; these read DSGFR and GR.

This sequence belongs to the FMN-dependent alpha-hydroxy acid dehydrogenase family. Homotetramer. The cofactor is FMN.

The protein localises to the cell inner membrane. The catalysed reaction is (S)-mandelate + A = phenylglyoxylate + AH2. It participates in aromatic compound metabolism; (R)-mandelate degradation; benzoate from (R)-mandelate: step 2/4. Its function is as follows. Catalyzes the dehydrogenation of (S)-mandelate to phenylglyoxylate (benzoylformate). Is likely involved in the utilization of mandelate as a sole source of carbon and energy for growth. Active in vitro with the artificial electron acceptors 2,6-dichlorophenolindophenol (DCPIP) or ferricyanide, but in vivo most likely transfer the electron pair from the reduced flavin to a component of the electron transport chain in the membrane, possibly a quinone. Shows very low activity with oxygen as the electron acceptor, and also with 3-indolelactate and medium chain 2-hydroxyacids as substrates. The polypeptide is (S)-mandelate dehydrogenase (Pseudomonas putida (Arthrobacter siderocapsulatus)).